A 62-amino-acid chain; its full sequence is uncharacterized protein (62 aa).

A disordered region spans residues 1-62 (MSSTAEEMAA…SNGEAKRKEK (62 aa)). The span at 28–37 (TKSDRVEHKH) shows a compositional bias: basic and acidic residues.

This is an uncharacterized protein from Caenorhabditis elegans.